The sequence spans 633 residues: Probable extracellular metalloproteinase 3 (633 aa).

Residues 1–18 (MHGLLLAGLLALPMNVLA) form the signal peptide. The propeptide occupies 19-246 (HPAEQHASNV…VHNVVDYVAS (228 aa)). N-linked (GlcNAc...) asparagine glycosylation occurs at asparagine 410. Residue histidine 429 participates in Zn(2+) binding. Residue glutamate 430 is part of the active site. Histidine 433 is a binding site for Zn(2+). Asparagine 480 and asparagine 622 each carry an N-linked (GlcNAc...) asparagine glycan.

It belongs to the peptidase M36 family. Zn(2+) serves as cofactor.

It is found in the secreted. In terms of biological role, secreted metalloproteinase probably acting as a virulence factor. This is Probable extracellular metalloproteinase 3 (MEP3) from Trichophyton verrucosum (strain HKI 0517).